The sequence spans 136 residues: Large ribosomal subunit protein uL16 (136 aa).

This sequence belongs to the universal ribosomal protein uL16 family. In terms of assembly, part of the 50S ribosomal subunit.

Binds 23S rRNA and is also seen to make contacts with the A and possibly P site tRNAs. The chain is Large ribosomal subunit protein uL16 from Psychromonas ingrahamii (strain DSM 17664 / CCUG 51855 / 37).